The chain runs to 850 residues: Receptor-like protein kinase ANXUR1 (850 aa).

Positions 1–26 (MSGKTRILFFLTCLSFLLVFPTRSNG) are cleaved as a signal peptide. Over 27–429 (QDLALSCGTS…KKEFKNEKRH (403 aa)) the chain is Extracellular. N-linked (GlcNAc...) asparagine glycans are attached at residues Asn-114, Asn-132, Asn-292, Asn-302, and Asn-330. Residues 430-450 (AFIIGSAGGVLAVLIGALCFT) traverse the membrane as a helical segment. The Cytoplasmic segment spans residues 451–850 (AYKKKQGYQG…FSQIVNPKGR (400 aa)). The region spanning 517-790 (FDDSNVIGVG…GDVLWNLEFA (274 aa)) is the Protein kinase domain. Residues 523 to 531 (IGVGGFGKV) and Lys-545 contribute to the ATP site. Asp-641 (proton acceptor) is an active-site residue. The tract at residues 796–850 (TADGTRHRTPNNGGSSEDLGRGGMAVNVAGRDDVSDLSSEDNTEIFSQIVNPKGR) is disordered. Polar residues predominate over residues 839–850 (EIFSQIVNPKGR).

It belongs to the protein kinase superfamily. Ser/Thr protein kinase family. In terms of tissue distribution, expressed in pollen, but not in pistils or seedlings.

It is found in the cell membrane. The catalysed reaction is L-seryl-[protein] + ATP = O-phospho-L-seryl-[protein] + ADP + H(+). It carries out the reaction L-threonyl-[protein] + ATP = O-phospho-L-threonyl-[protein] + ADP + H(+). In terms of biological role, receptor-like protein kinase that controls pollen tube behavior by directing rupture at proper timing to release the sperm cell. This chain is Receptor-like protein kinase ANXUR1 (ANX1), found in Arabidopsis thaliana (Mouse-ear cress).